The chain runs to 582 residues: Pineapple eye protein (582 aa).

The C2HC pre-PHD-type zinc-finger motif lies at 6–44; the sequence is ELQCLICKYSDTDDLVFGEWMIVRNLQVHYFCLLLSTHL. The tract at residues 6–119 is extended PHD domain (ePHD); sequence ELQCLICKYS…QYKSYCYKCR (114 aa). The PHD-type; atypical zinc-finger motif lies at 72 to 119; it reads RKCWYCNKIGASLQCDRCRSLFHLKCGLENRAVFEFCGQYKSYCYKCR. Disordered stretches follow at residues 292–311 and 323–422; these read PART…DGSF and RSLT…ASEI. The span at 340–363 shows a compositional bias: polar residues; it reads SSNITVIFSQPKSNATSERLSLSP. The segment covering 383 to 399 has biased composition (basic and acidic residues); sequence SIDENHSPQPIARRDTS.

Functionally, required for survival of imaginal disk cells possibly by regulation of cell apoptosis. Required for germline stem cell self-renewal through mediation of BMP signaling. This chain is Pineapple eye protein, found in Drosophila melanogaster (Fruit fly).